A 261-amino-acid polypeptide reads, in one-letter code: Mite allergen Eur m 3 (261 aa).

Residues 1–18 (MVICNAIIVLLLAFNTLA) form the signal peptide. Residues 19–29 (NPILPSSPNAT) constitute a propeptide that is removed on maturation. The 231-residue stretch at 30–260 (IVGGQKAKAG…FIDWIDSKRS (231 aa)) folds into the Peptidase S1 domain. A disulfide bond links C54 and C70. Residues H69 and D114 each act as charge relay system in the active site. 2 disulfide bridges follow: C181-C198 and C210-C236. S214 (charge relay system) is an active-site residue.

Belongs to the peptidase S1 family.

Its subcellular location is the secreted. The chain is Mite allergen Eur m 3 (EURM3) from Euroglyphus maynei (Mayne's house dust mite).